Here is a 381-residue protein sequence, read N- to C-terminus: Queuine tRNA-ribosyltransferase (381 aa).

Asp96 acts as the Proton acceptor in catalysis. Residues 96-100, Asp150, Gln193, and Gly220 contribute to the substrate site; that span reads DSGGF. The interval 251–257 is RNA binding; it reads GVGSPDS. Asp270 acts as the Nucleophile in catalysis. An RNA binding; important for wobble base 34 recognition region spans residues 275–279; it reads TRIAR. Cys308, Cys310, Cys313, and His339 together coordinate Zn(2+).

Belongs to the queuine tRNA-ribosyltransferase family. As to quaternary structure, homodimer. Within each dimer, one monomer is responsible for RNA recognition and catalysis, while the other monomer binds to the replacement base PreQ1. Requires Zn(2+) as cofactor.

It carries out the reaction 7-aminomethyl-7-carbaguanine + guanosine(34) in tRNA = 7-aminomethyl-7-carbaguanosine(34) in tRNA + guanine. The protein operates within tRNA modification; tRNA-queuosine biosynthesis. Catalyzes the base-exchange of a guanine (G) residue with the queuine precursor 7-aminomethyl-7-deazaguanine (PreQ1) at position 34 (anticodon wobble position) in tRNAs with GU(N) anticodons (tRNA-Asp, -Asn, -His and -Tyr). Catalysis occurs through a double-displacement mechanism. The nucleophile active site attacks the C1' of nucleotide 34 to detach the guanine base from the RNA, forming a covalent enzyme-RNA intermediate. The proton acceptor active site deprotonates the incoming PreQ1, allowing a nucleophilic attack on the C1' of the ribose to form the product. After dissociation, two additional enzymatic reactions on the tRNA convert PreQ1 to queuine (Q), resulting in the hypermodified nucleoside queuosine (7-(((4,5-cis-dihydroxy-2-cyclopenten-1-yl)amino)methyl)-7-deazaguanosine). The sequence is that of Queuine tRNA-ribosyltransferase from Lysinibacillus sphaericus (strain C3-41).